Consider the following 433-residue polypeptide: Serine--tRNA ligase (433 aa).

235–237 lines the L-serine pocket; the sequence is TSE. Position 266–268 (266–268) interacts with ATP; that stretch reads RSE. L-serine is bound at residue E289. An ATP-binding site is contributed by 353–356; that stretch reads EISS. Residue S388 participates in L-serine binding.

Belongs to the class-II aminoacyl-tRNA synthetase family. Type-1 seryl-tRNA synthetase subfamily. In terms of assembly, homodimer. The tRNA molecule binds across the dimer.

It is found in the cytoplasm. The catalysed reaction is tRNA(Ser) + L-serine + ATP = L-seryl-tRNA(Ser) + AMP + diphosphate + H(+). It catalyses the reaction tRNA(Sec) + L-serine + ATP = L-seryl-tRNA(Sec) + AMP + diphosphate + H(+). It participates in aminoacyl-tRNA biosynthesis; selenocysteinyl-tRNA(Sec) biosynthesis; L-seryl-tRNA(Sec) from L-serine and tRNA(Sec): step 1/1. Its function is as follows. Catalyzes the attachment of serine to tRNA(Ser). Is also able to aminoacylate tRNA(Sec) with serine, to form the misacylated tRNA L-seryl-tRNA(Sec), which will be further converted into selenocysteinyl-tRNA(Sec). The chain is Serine--tRNA ligase from Burkholderia pseudomallei (strain 668).